The chain runs to 185 residues: Ribosome-recycling factor (185 aa).

This sequence belongs to the RRF family.

It localises to the cytoplasm. Its function is as follows. Responsible for the release of ribosomes from messenger RNA at the termination of protein biosynthesis. May increase the efficiency of translation by recycling ribosomes from one round of translation to another. The protein is Ribosome-recycling factor of Buchnera aphidicola subsp. Acyrthosiphon pisum (strain APS) (Acyrthosiphon pisum symbiotic bacterium).